A 96-amino-acid polypeptide reads, in one-letter code: Large ribosomal subunit protein uL23 (96 aa).

It belongs to the universal ribosomal protein uL23 family. In terms of assembly, part of the 50S ribosomal subunit. Contacts protein L29, and trigger factor when it is bound to the ribosome.

Its function is as follows. One of the early assembly proteins it binds 23S rRNA. One of the proteins that surrounds the polypeptide exit tunnel on the outside of the ribosome. Forms the main docking site for trigger factor binding to the ribosome. This chain is Large ribosomal subunit protein uL23, found in Brevibacillus brevis (strain 47 / JCM 6285 / NBRC 100599).